The primary structure comprises 93 residues: Protein translocase subunit SecE (93 aa).

Residues 1-33 (MTDALGSIDMPDAEDETREKKARKGGKRGKKGP) form a disordered region. The span at 20 to 33 (KKARKGGKRGKKGP) shows a compositional bias: basic residues. Residues 64 to 84 (TVVIVFVVIMIGLVTVIDFGF) form a helical membrane-spanning segment.

Belongs to the SecE/SEC61-gamma family. In terms of assembly, component of the Sec protein translocase complex. Heterotrimer consisting of SecY, SecE and SecG subunits. The heterotrimers can form oligomers, although 1 heterotrimer is thought to be able to translocate proteins. Interacts with the ribosome. Interacts with SecDF, and other proteins may be involved. Interacts with SecA.

It is found in the cell membrane. Essential subunit of the Sec protein translocation channel SecYEG. Clamps together the 2 halves of SecY. May contact the channel plug during translocation. This is Protein translocase subunit SecE from Streptomyces virginiae (Streptomyces cinnamonensis).